The sequence spans 313 residues: tRNA-cytidine(32) 2-sulfurtransferase (313 aa).

The short motif at 50–55 is the PP-loop motif element; the sequence is SGGKDS. The [4Fe-4S] cluster site is built by Cys125, Cys128, and Cys216.

This sequence belongs to the TtcA family. In terms of assembly, homodimer. Mg(2+) serves as cofactor. It depends on [4Fe-4S] cluster as a cofactor.

Its subcellular location is the cytoplasm. It carries out the reaction cytidine(32) in tRNA + S-sulfanyl-L-cysteinyl-[cysteine desulfurase] + AH2 + ATP = 2-thiocytidine(32) in tRNA + L-cysteinyl-[cysteine desulfurase] + A + AMP + diphosphate + H(+). It participates in tRNA modification. Functionally, catalyzes the ATP-dependent 2-thiolation of cytidine in position 32 of tRNA, to form 2-thiocytidine (s(2)C32). The sulfur atoms are provided by the cysteine/cysteine desulfurase (IscS) system. This is tRNA-cytidine(32) 2-sulfurtransferase from Haemophilus influenzae (strain ATCC 51907 / DSM 11121 / KW20 / Rd).